Reading from the N-terminus, the 615-residue chain is MIGLLFVFSVLLSFSVGYIFPFSTSNGPTVNDTLQHAIRSQRDVSKPIPIDRVEFSGVSLSSFFESEGYSSDSLSNLYGLLKENIAGVMIDLYWNEFTSKWQLCPAPFPNNITYTSSNRVVDVSWNNRTYKCDPNLSTDDIMSILNNFIRDTNTDVEANFMHVMYNLKSIHYKKSNQTINLENAYKEKNSNFNVGMDTLNDTVSLLSSYIFTPLLLEQYQSSSSKNANSSSSIRYIDSLNETQAIQKFYNQSTILMPSLQTTLLTQYKRLMVHVISNDMAESSRSYQISFSDKETIFFNNVFPAMIGHTNNASADDFCYELTHAYNGTDVNIMEFNRVSLNSTLRLIIDNDKTPFTTDSLSKYVRCGYCPVFNSTQYSSQKVTEGNSSIISQEFTSNLFWSWAPGQPSGPDNCTNCTRPVTNYTSKYSEASNGGSDEEEHSNNIAYKCVALTENGWEVSNCYEKYLFACQNKLSRNEWKLDNYTKRNYFDLDDDDCPEGYFFSLPRSNIEMLSLMTTVKQENVSYPIWIDLNDITVENCFVSGGPYAQCPYQETVTTDKFVRMIAPSFVVAMVVLVLIFLEKVFRKTPIQTNRKRYWKKAIQEYYAKNDYEGVPS.

The first 17 residues, 1–17, serve as a signal peptide directing secretion; sequence MIGLLFVFSVLLSFSVG. The Extracellular segment spans residues 18 to 559; sequence YIFPFSTSNG…PYQETVTTDK (542 aa). Asn-31, Asn-111, Asn-127, Asn-135, Asn-176, Asn-200, Asn-228, Asn-240, Asn-250, Asn-311, Asn-326, Asn-341, Asn-373, Asn-386, Asn-412, Asn-415, Asn-422, Asn-482, and Asn-522 each carry an N-linked (GlcNAc...) asparagine glycan. A helical membrane pass occupies residues 560–580; it reads FVRMIAPSFVVAMVVLVLIFL. The Cytoplasmic portion of the chain corresponds to 581-615; that stretch reads EKVFRKTPIQTNRKRYWKKAIQEYYAKNDYEGVPS.

This sequence belongs to the MTC6 family.

The protein localises to the membrane. May be involved in telomere capping. The chain is Maintenance of telomere capping protein 6 (MTC6) from Candida dubliniensis (strain CD36 / ATCC MYA-646 / CBS 7987 / NCPF 3949 / NRRL Y-17841) (Yeast).